The sequence spans 495 residues: Protein SLENDER RICE1-LIKE 1 (495 aa).

Positions 77-449 constitute a GRAS domain; it reads EEEEVAGIRL…RPLFSASAWE (373 aa). Residues 84–140 form a leucine repeat I (LRI) region; it reads IRLVHLLMSCAGAIEAGDHALASAQLADSHAALAAVSAASGIGRVAVHFTTALSRRL. The interval 158-223 is VHIID; the sequence is YHHFYEACPY…GGPPFLRITG (66 aa). The VHIID motif lies at 189–193; it reads VHVID. Residues 237–269 form a leucine repeat II (LRII) region; it reads DVGLRLADLARSVRVRFSFRGVAANSLDEVRPW. Residues 279-371 form a PFYRE region; the sequence is VAFNSVLQLH…EAYLQREICD (93 aa). The short motif at 287-291 is the LXXLL motif element; that stretch reads LHRLL. The segment at 374–449 is SAW; it reads CGEGAARRER…RPLFSASAWE (76 aa). Positions 451–495 are disordered; the sequence is AGDGGGDNNNNSNSNVSGSSGSDSNNSGSSNGKSSGARDGSSVCL. Low complexity predominate over residues 458-485; it reads NNNNSNSNVSGSSGSDSNNSGSSNGKSS.

The protein belongs to the GRAS family. Expressed in elongating internodes and flowers. Expressed in floral meristem, stamen primordia and tapetum in developing anthers. Expressed at low levels in roots, shoot apices and rachis.

It localises to the nucleus. Functionally, probable transcriptional regulator that acts as a repressor of the gibberellin (GA) signaling pathway. Its repressive activity is weaker than that of SLR1. Its overexpression prevents the GA signaling pathway and induces a dwarf phenotype. This is Protein SLENDER RICE1-LIKE 1 from Oryza sativa subsp. japonica (Rice).